The chain runs to 448 residues: Methionine aminopeptidase 2 (448 aa).

Positions 1-94 are disordered; it reads MAAQVTDALK…PRVLLSNLFP (94 aa). The segment covering 37 to 50 has biased composition (acidic residues); the sequence is AEAEDSDDDDEEPV. A compositionally biased stretch (basic residues) spans 61 to 74; that stretch reads KKKRKRKKKPKKKA. Position 201 (His-201) interacts with substrate. Residues Asp-221, Asp-232, and His-301 each coordinate a divalent metal cation. His-309 is a binding site for substrate. Positions 334 and 429 each coordinate a divalent metal cation.

It belongs to the peptidase M24A family. Methionine aminopeptidase eukaryotic type 2 subfamily. Co(2+) serves as cofactor. It depends on Zn(2+) as a cofactor. Requires Mn(2+) as cofactor. The cofactor is Fe(2+).

The protein resides in the cytoplasm. It catalyses the reaction Release of N-terminal amino acids, preferentially methionine, from peptides and arylamides.. Functionally, cotranslationally removes the N-terminal methionine from nascent proteins. The N-terminal methionine is often cleaved when the second residue in the primary sequence is small and uncharged (Met-Ala-, Cys, Gly, Pro, Ser, Thr, or Val). The sequence is that of Methionine aminopeptidase 2 from Botryotinia fuckeliana (strain B05.10) (Noble rot fungus).